Reading from the N-terminus, the 254-residue chain is Nickel import ATP-binding protein NikD (254 aa).

Positions 2-241 constitute an ABC transporter domain; it reads PQQIELRNIA…PKHTVTRSLV (240 aa). Residue 36–43 participates in ATP binding; that stretch reads GGSGSGKS.

Belongs to the ABC transporter superfamily. Nickel importer (TC 3.A.1.5.3) family. As to quaternary structure, the complex is composed of two ATP-binding proteins (NikD and NikE), two transmembrane proteins (NikB and NikC) and a solute-binding protein (NikA).

The protein localises to the cell inner membrane. It catalyses the reaction Ni(2+)(out) + ATP + H2O = Ni(2+)(in) + ADP + phosphate + H(+). Functionally, part of the ABC transporter complex NikABCDE involved in nickel import. Responsible for energy coupling to the transport system. This chain is Nickel import ATP-binding protein NikD, found in Escherichia coli (strain K12).